We begin with the raw amino-acid sequence, 407 residues long: Cytochrome P450 NovI (407 aa).

Heme is bound at residue Cys357.

It belongs to the cytochrome P450 family. Heme serves as cofactor.

It functions in the pathway antibiotic biosynthesis; novobiocin biosynthesis. Functionally, together with NovH, involved in the formation of a beta-OH-Tyr intermediate in the novobiocin biosynthesis pathway, an aminocoumarin family antibiotic that targets bacterial DNA gyrases. Acts as a cytochrome P450-type monooxygenase with specificity for the tyrosyl-S-NovH acyl enzyme (L-Tyr-S-NovH) to form the beta-OH-Tyr intermediate (L-beta-OH-Tyr-S-NovH). This chain is Cytochrome P450 NovI (novI), found in Streptomyces niveus (Streptomyces spheroides).